Reading from the N-terminus, the 185-residue chain is Small ribosomal subunit protein uS7 (185 aa).

It belongs to the universal ribosomal protein uS7 family. In terms of assembly, part of the 30S ribosomal subunit.

Its function is as follows. One of the primary rRNA binding proteins, it binds directly to 16S rRNA where it nucleates assembly of the head domain of the 30S subunit. Is located at the subunit interface close to the decoding center. This chain is Small ribosomal subunit protein uS7, found in Methanosarcina barkeri (strain Fusaro / DSM 804).